The primary structure comprises 558 residues: SPATS2-like protein (558 aa).

N-acetylalanine is present on alanine 2. Basic residues predominate over residues glycine 63–glutamine 79. The segment at glycine 63 to alanine 204 is disordered. 2 stretches are compositionally biased toward basic and acidic residues: residues glycine 80–glutamate 92 and glycine 110–arginine 142. At serine 120 the chain carries Phosphoserine. The stretch at lysine 279 to leucine 344 forms a coiled coil. Disordered regions lie at residues glycine 385 to lysine 406 and threonine 421 to alanine 514. Residues threonine 421–serine 433 are compositionally biased toward polar residues. Residues histidine 469–glycine 485 are compositionally biased toward basic residues.

The protein belongs to the SPATS2 family.

It localises to the cytoplasm. It is found in the nucleus. The protein localises to the nucleolus. The chain is SPATS2-like protein (Spats2l) from Mus musculus (Mouse).